Reading from the N-terminus, the 305-residue chain is MVDKLTHLKQLEAESIHIIREVAAEFDNPVMLYSIGKDSAVMLHLARKAFFPGKLPFPVMHVDTRWKFQEMYKFRDKMVEELGLDLITHINPDGVAQNINPFTHGSAKHTDIMKTEGLKQALDKHGFDAAFGGARRDEEKSRAKERVYSFRDSKHRWDPKNQRPELWNVYNGKVNKGESIRVFPLSNWTELDIWQYIYLEGIPIVPLYFAAEREVIEKNGTLIMIDDERILEHLSDEDKARIVKKKVRFRTLGCYPLTGAVESEAESLTDIIQEMLLTRTSERQGRVIDHDGAGSMEDKKRQGYF.

The protein belongs to the PAPS reductase family. CysD subfamily. Heterodimer composed of CysD, the smaller subunit, and CysN.

It catalyses the reaction sulfate + ATP + H(+) = adenosine 5'-phosphosulfate + diphosphate. The protein operates within sulfur metabolism; hydrogen sulfide biosynthesis; sulfite from sulfate: step 1/3. With CysN forms the ATP sulfurylase (ATPS) that catalyzes the adenylation of sulfate producing adenosine 5'-phosphosulfate (APS) and diphosphate, the first enzymatic step in sulfur assimilation pathway. APS synthesis involves the formation of a high-energy phosphoric-sulfuric acid anhydride bond driven by GTP hydrolysis by CysN coupled to ATP hydrolysis by CysD. In Pseudomonas fluorescens (strain Pf0-1), this protein is Sulfate adenylyltransferase subunit 2.